Consider the following 311-residue polypeptide: Dermonecrotic toxin LlSicTox-alphaIII1i (311 aa).

The signal sequence occupies residues 1–21 (MYAHLALILGCWTVVLQGAET). A propeptide spanning residues 22–26 (DVGER) is cleaved from the precursor. Residue H38 is part of the active site. 2 residues coordinate Mg(2+): E58 and D60. Residue H73 is the Nucleophile of the active site. An intrachain disulfide couples C77 to C83. Position 117 (D117) interacts with Mg(2+).

This sequence belongs to the arthropod phospholipase D family. Class I subfamily. Requires Mg(2+) as cofactor. As to expression, expressed by the venom gland.

It is found in the secreted. It catalyses the reaction an N-(acyl)-sphingosylphosphocholine = an N-(acyl)-sphingosyl-1,3-cyclic phosphate + choline. The catalysed reaction is an N-(acyl)-sphingosylphosphoethanolamine = an N-(acyl)-sphingosyl-1,3-cyclic phosphate + ethanolamine. It carries out the reaction a 1-acyl-sn-glycero-3-phosphocholine = a 1-acyl-sn-glycero-2,3-cyclic phosphate + choline. The enzyme catalyses a 1-acyl-sn-glycero-3-phosphoethanolamine = a 1-acyl-sn-glycero-2,3-cyclic phosphate + ethanolamine. Its function is as follows. Dermonecrotic toxins cleave the phosphodiester linkage between the phosphate and headgroup of certain phospholipids (sphingolipid and lysolipid substrates), forming an alcohol (often choline) and a cyclic phosphate. This toxin acts on sphingomyelin (SM) with high activity. It also act on acyl- and alkyl-lysophosphatidylcholine (LPC), but not on sphingosylphosphorylcholine (SPC) and phosphatidylcholine (PC). It may also act on ceramide phosphoethanolamine (CPE), and lysophosphatidylethanolamine (LPE), but not on lysophosphatidylserine (LPS), and lysophosphatidylglycerol (LPG). It acts by transphosphatidylation, releasing exclusively cyclic phosphate products as second products. Induces complement-dependent hemolysis and dermonecrosis. Also induces increased vascular permeability, edema, inflammatory response, and platelet aggregation. The chain is Dermonecrotic toxin LlSicTox-alphaIII1i from Loxosceles laeta (South American recluse spider).